A 1884-amino-acid polypeptide reads, in one-letter code: Fatty acid synthase subunit alpha (1884 aa).

The interval 91-141 (TPDPAEPPAAEEPKAETGKESAPAASAAAAAATQPAAAVAPPPQSAGPVES) is disordered. A compositionally biased stretch (low complexity) spans 111–129 (SAPAASAAAAAATQPAAAV). The region spanning 147-222 (VKASLLIHVL…EQFQDTFSGS (76 aa)) is the Carrier domain. The residue at position 182 (Ser182) is an O-(pantetheine 4'-phosphoryl)serine. Positions 583–613 (TEQTTQDALAIPTGSNTPTEEDELSTASDDD) are disordered. Polar residues predominate over residues 584-600 (EQTTQDALAIPTGSNTP). A compositionally biased stretch (acidic residues) spans 601–613 (TEEDELSTASDDD). The beta-ketoacyl reductase stretch occupies residues 677–873 (DKYVLVTGAG…CGAIIGWTRG (197 aa)). Residues 1120 to 1660 (IQEVVIQHDL…QKGAQAVVVH (541 aa)) form the Ketosynthase family 3 (KS3) domain. Catalysis depends on for beta-ketoacyl synthase activity residues Cys1303, His1545, and His1586. The Mg(2+) site is built by Asp1770, Val1771, and Glu1772. Residues 1770–1772 (DVE), Tyr1796, Ser1806, 1815–1825 (EATFKALGVSS), 1839–1842 (RDGN), and 1869–1871 (ISH) contribute to the acetyl-CoA site. Residues Ser1870 and His1871 each coordinate Mg(2+).

It belongs to the thiolase-like superfamily. Fungal fatty acid synthetase subunit alpha family. Fatty acid synthase is composed of alpha and beta subunits.

It catalyses the reaction acetyl-CoA + n malonyl-CoA + 2n NADPH + 4n H(+) = a long-chain-acyl-CoA + n CoA + n CO2 + 2n NADP(+).. It carries out the reaction a fatty acyl-[ACP] + malonyl-[ACP] + H(+) = a 3-oxoacyl-[ACP] + holo-[ACP] + CO2. The catalysed reaction is a (3R)-hydroxyacyl-[ACP] + NADP(+) = a 3-oxoacyl-[ACP] + NADPH + H(+). In terms of biological role, fatty acid synthetase catalyzes the formation of long-chain fatty acids from acetyl-CoA, malonyl-CoA and NADPH. The alpha subunit contains domains for: acyl carrier protein, 3-oxoacyl-[acyl-carrier-protein] reductase, and 3-oxoacyl-[acyl-carrier-protein] synthase. In Candida parapsilosis (strain CDC 317 / ATCC MYA-4646) (Yeast), this protein is Fatty acid synthase subunit alpha (FAS2).